Consider the following 426-residue polypeptide: Protein EARLY STARVATION 1, chloroplastic (426 aa).

The transit peptide at 1–58 directs the protein to the chloroplast; it reads MSEMAASSAISLLDIKLRRFGVGASNHELRLTKWFKGDQAGAPTRRFTCFADMLAPIR. Disordered regions lie at residues 106–127 and 396–426; these read CTPRLTGPQSRDTPPKRDTGIA and QPRERPPGVYPNLEFGPSPPPEPDLPPDQPQ. Residues 118-127 are compositionally biased toward basic and acidic residues; the sequence is TPPKRDTGIA. The span at 412–426 shows a compositional bias: pro residues; sequence PSPPPEPDLPPDQPQ.

This sequence belongs to the ESV1 family.

The protein localises to the plastid. Its subcellular location is the chloroplast stroma. It localises to the plastid stroma. In terms of biological role, binds preferentially to highly ordered alpha-glucans, such as starch and crystalline maltodextrins. Involved in the organization of the starch granule matrix, thus influencing starch turnover by modulating the accessibility of starch polymers to modifying and degrading enzymes involved in phosphorylation, hydrolyzes and synthesis, including starch synthases (SSI and SSIII), starch phosphorylases (PHS1), isoamylase, beta-amylase, glucan water dikinase (GWD) and phosphoglucan water dikinase (PWD). Prevents GWD- and PWD-mediated starch phosphorylation, and subsequent degradation. Required for the control of starch degradation in leaves and starch distribution in nonphotosynthetic parts (e.g. cells immediately adjacent to veins, columella cells of root caps, stems, flowers and siliques) by limiting the hasty depletion of starch reserves during the night. Promotes gravitropic responses, negative in shoots but positive in roots, by maintaining starch granules (statoliths) accumulation in hypocotyls and roots columella, especially in dark conditions and in the endodermis, where starch is formed from transported glucose-6-phosphates. This Arabidopsis thaliana (Mouse-ear cress) protein is Protein EARLY STARVATION 1, chloroplastic.